Consider the following 440-residue polypeptide: Xylose isomerase (440 aa).

Residues His-101 and Asp-104 contribute to the active site. Residues Glu-232, Glu-268, His-271, Asp-296, Asp-307, Asp-309, and Asp-339 each coordinate Mg(2+).

Belongs to the xylose isomerase family. As to quaternary structure, homotetramer. Mg(2+) serves as cofactor.

Its subcellular location is the cytoplasm. It carries out the reaction alpha-D-xylose = alpha-D-xylulofuranose. The chain is Xylose isomerase from Escherichia coli O157:H7.